The sequence spans 278 residues: NADPH-dependent 7-cyano-7-deazaguanine reductase (278 aa).

A substrate-binding site is contributed by 87–89; sequence IES. 89–90 provides a ligand contact to NADPH; it reads SK. Cysteine 185 functions as the Thioimide intermediate in the catalytic mechanism. Aspartate 192 acts as the Proton donor in catalysis. Residue 224-225 coordinates substrate; it reads HE. 253–254 lines the NADPH pocket; the sequence is RG. Positions 255 to 278 are disordered; it reads GLDINPYRSTNPTFSVQNHRSFRQ. The segment covering 261-278 has biased composition (polar residues); the sequence is YRSTNPTFSVQNHRSFRQ.

Belongs to the GTP cyclohydrolase I family. QueF type 2 subfamily. In terms of assembly, homodimer.

The protein localises to the cytoplasm. The catalysed reaction is 7-aminomethyl-7-carbaguanine + 2 NADP(+) = 7-cyano-7-deazaguanine + 2 NADPH + 3 H(+). It participates in tRNA modification; tRNA-queuosine biosynthesis. Its function is as follows. Catalyzes the NADPH-dependent reduction of 7-cyano-7-deazaguanine (preQ0) to 7-aminomethyl-7-deazaguanine (preQ1). The polypeptide is NADPH-dependent 7-cyano-7-deazaguanine reductase (Coxiella burnetii (strain CbuK_Q154) (Coxiella burnetii (strain Q154))).